The sequence spans 184 residues: PEVTASERAYHLRKMKTRMKRVDVTGDGFISREDYELIAVRIAKIAKLSAEKAEETRQEFLRVADQLGLAPGVRISVEEAAVNATDSLLKMKAEEKAMAVIQSLIMYDCIDTDKDGYVSLPEFKAFLQAVGPDITDDKAITCFNTLDFNKNGQISRDEFLVTVNDFLFGLEETALANAFYGDLL.

4 EF-hand domains span residues 10 to 45 (YHLR…IAKI), 46 to 81 (AKLS…EEAA), 98 to 133 (MAVI…VGPD), and 134 to 169 (ITDD…FLFG). Ca(2+)-binding residues include D111, D113, D115, Y117, E122, D147, N149, N151, Q153, and E158.

Functionally, this Ca(2+)-dependent protein binds to luciferin. The luciferin of LBP is capable of reacting with luciferase and O(2) only when calcium is bound. This Renilla reniformis (Sea pansy) protein is Luciferin-binding protein.